Here is a 111-residue protein sequence, read N- to C-terminus: Nucleoid-associated protein NMA1657 (111 aa).

The protein belongs to the YbaB/EbfC family. In terms of assembly, homodimer.

Its subcellular location is the cytoplasm. It is found in the nucleoid. In terms of biological role, binds to DNA and alters its conformation. May be involved in regulation of gene expression, nucleoid organization and DNA protection. The protein is Nucleoid-associated protein NMA1657 of Neisseria meningitidis serogroup A / serotype 4A (strain DSM 15465 / Z2491).